The primary structure comprises 330 residues: Ubiquinone biosynthesis protein COQ4, mitochondrial (330 aa).

The N-terminal 31 residues, 1–31 (MLQSTKVTKSVLTNVLRVEQRRGFLLSGAAV), are a transit peptide targeting the mitochondrion. Positions 212, 213, 216, and 228 each coordinate Zn(2+).

Belongs to the COQ4 family. Component of a multi-subunit COQ enzyme complex, composed of at least COQ3, COQ4, COQ5, COQ6, COQ7 and COQ9. Zn(2+) serves as cofactor.

Its subcellular location is the mitochondrion inner membrane. The enzyme catalyses a 4-hydroxy-3-methoxy-5-(all-trans-polyprenyl)benzoate + H(+) = a 2-methoxy-6-(all-trans-polyprenyl)phenol + CO2. Its pathway is cofactor biosynthesis; ubiquinone biosynthesis. In terms of biological role, lyase that catalyzes the C1-decarboxylation of 4-hydroxy-3-methoxy-5-(all-trans-polyprenyl)benzoic acid into 2-methoxy-6-(all-trans-polyprenyl)phenol during ubiquinone biosynthesis. The chain is Ubiquinone biosynthesis protein COQ4, mitochondrial from Candida glabrata (strain ATCC 2001 / BCRC 20586 / JCM 3761 / NBRC 0622 / NRRL Y-65 / CBS 138) (Yeast).